The following is a 222-amino-acid chain: Triosephosphate isomerase (222 aa).

A substrate-binding site is contributed by 10-12 (NCK). His-93 functions as the Electrophile in the catalytic mechanism. Glu-141 functions as the Proton acceptor in the catalytic mechanism. Substrate is bound by residues Ile-146, Gly-180, and 201-202 (AS).

The protein belongs to the triosephosphate isomerase family. In terms of assembly, homotetramer; dimer of dimers.

The protein resides in the cytoplasm. The enzyme catalyses D-glyceraldehyde 3-phosphate = dihydroxyacetone phosphate. The protein operates within carbohydrate biosynthesis; gluconeogenesis. It participates in carbohydrate degradation; glycolysis; D-glyceraldehyde 3-phosphate from glycerone phosphate: step 1/1. Involved in the gluconeogenesis. Catalyzes stereospecifically the conversion of dihydroxyacetone phosphate (DHAP) to D-glyceraldehyde-3-phosphate (G3P). The polypeptide is Triosephosphate isomerase (Cenarchaeum symbiosum (strain A)).